Reading from the N-terminus, the 331-residue chain is Probable tRNA-dihydrouridine synthase (331 aa).

Residues 17–19 and glutamine 72 contribute to the FMN site; that span reads PMS. Cysteine 102 acts as the Proton donor in catalysis. FMN-binding positions include lysine 141, 202-204, and 226-227; these read NGD and GR.

This sequence belongs to the Dus family. FMN is required as a cofactor.

It catalyses the reaction a 5,6-dihydrouridine in tRNA + NAD(+) = a uridine in tRNA + NADH + H(+). It carries out the reaction a 5,6-dihydrouridine in tRNA + NADP(+) = a uridine in tRNA + NADPH + H(+). In terms of biological role, catalyzes the synthesis of 5,6-dihydrouridine (D), a modified base found in the D-loop of most tRNAs, via the reduction of the C5-C6 double bond in target uridines. This Rickettsia conorii (strain ATCC VR-613 / Malish 7) protein is Probable tRNA-dihydrouridine synthase (dus).